The chain runs to 302 residues: 1,2-dihydroxynaphthalene dioxygenase (302 aa).

2 consecutive VOC domains span residues 9-124 (ELGY…IFWG) and 149-270 (GLGH…PGWR). Position 152 (His-152) interacts with Fe cation. Substrate contacts are provided by residues His-152, 199–200 (DH), His-215, and Tyr-256. His-215 is a binding site for Fe cation. Residue Glu-266 coordinates Fe cation.

This sequence belongs to the extradiol ring-cleavage dioxygenase family. The cofactor is Fe(2+).

The enzyme catalyses naphthalene-1,2-diol + O2 = 2-hydroxychromene-2-carboxylate + H(+). The protein operates within aromatic compound metabolism; naphthalene degradation. In terms of biological role, involved in the naphthalene catabolic pathway. Catalyzes the meta-cleavage of 1,2-dihydroxynaphthalene (1,2-DHN) to yield 2-hydroxychromene-2-carboxylic acid. In Pseudomonas putida (Arthrobacter siderocapsulatus), this protein is 1,2-dihydroxynaphthalene dioxygenase (nahC).